A 275-amino-acid polypeptide reads, in one-letter code: Formamidopyrimidine-DNA glycosylase (275 aa).

The active-site Schiff-base intermediate with DNA is proline 2. The active-site Proton donor is the glutamate 3. Lysine 58 (proton donor; for beta-elimination activity) is an active-site residue. DNA-binding residues include histidine 91 and arginine 110. An FPG-type zinc finger spans residues 238-272; it reads QVYGQTGKPCPRCGQAIVKLKVGGRGTHICPKCQK. Arginine 262 acts as the Proton donor; for delta-elimination activity in catalysis.

Belongs to the FPG family. As to quaternary structure, monomer. The cofactor is Zn(2+).

The catalysed reaction is Hydrolysis of DNA containing ring-opened 7-methylguanine residues, releasing 2,6-diamino-4-hydroxy-5-(N-methyl)formamidopyrimidine.. It carries out the reaction 2'-deoxyribonucleotide-(2'-deoxyribose 5'-phosphate)-2'-deoxyribonucleotide-DNA = a 3'-end 2'-deoxyribonucleotide-(2,3-dehydro-2,3-deoxyribose 5'-phosphate)-DNA + a 5'-end 5'-phospho-2'-deoxyribonucleoside-DNA + H(+). Its function is as follows. Involved in base excision repair of DNA damaged by oxidation or by mutagenic agents. Acts as a DNA glycosylase that recognizes and removes damaged bases. Has a preference for oxidized purines, such as 7,8-dihydro-8-oxoguanine (8-oxoG). Has AP (apurinic/apyrimidinic) lyase activity and introduces nicks in the DNA strand. Cleaves the DNA backbone by beta-delta elimination to generate a single-strand break at the site of the removed base with both 3'- and 5'-phosphates. The polypeptide is Formamidopyrimidine-DNA glycosylase (Streptococcus pyogenes serotype M18 (strain MGAS8232)).